A 334-amino-acid chain; its full sequence is N-acetylmuramate/N-acetylglucosamine kinase (334 aa).

The protein belongs to the kinase AmgK family.

It catalyses the reaction N-acetyl-D-muramate + ATP = N-acetyl-alpha-D-muramate 1-phosphate + ADP + H(+). The catalysed reaction is N-acetyl-D-glucosamine + ATP = N-acetyl-alpha-D-glucosamine 1-phosphate + ADP + H(+). It functions in the pathway cell wall biogenesis; peptidoglycan recycling. Its function is as follows. Sugar kinase that catalyzes the ATP-dependent phosphorylation of N-acetylmuramate (MurNAc) and N-acetylglucosamine (GlcNAc) at its C1 hydroxyl group, leading to MurNAc alpha-1P and GlcNAc alpha-1P, respectively. Is likely involved in peptidoglycan recycling as part of a cell wall recycling pathway that bypasses de novo biosynthesis of the peptidoglycan precursor UDP-MurNAc. Is able to complement the fosfomycin sensitivity phenotype of a P.putida mutant lacking amgK. The chain is N-acetylmuramate/N-acetylglucosamine kinase from Neisseria meningitidis serogroup B (strain ATCC BAA-335 / MC58).